The sequence spans 326 residues: Homoserine kinase (326 aa).

It belongs to the pseudomonas-type ThrB family.

It carries out the reaction L-homoserine + ATP = O-phospho-L-homoserine + ADP + H(+). It functions in the pathway amino-acid biosynthesis; L-threonine biosynthesis; L-threonine from L-aspartate: step 4/5. This is Homoserine kinase from Brucella melitensis biotype 1 (strain ATCC 23456 / CCUG 17765 / NCTC 10094 / 16M).